The primary structure comprises 20 residues: Punein (20 aa).

Residues 1–20 (YHYYNPEENHFCATWDASKP) enclose the Barwin domain.

In terms of processing, the N-terminus is blocked.

The sequence is that of Punein from Punica granatum (Pomegranate).